The following is a 90-amino-acid chain: Probable acyl carrier protein (90 aa).

Positions 9 to 90 (QVTVEELSAL…LVNGALKTGV (82 aa)) constitute a Carrier domain. Ser-47 is modified (O-(pantetheine 4'-phosphoryl)serine).

4'-phosphopantetheine is transferred from CoA to a specific serine of the apo-ACP-like protein.

Its function is as follows. Involved in developmentally regulated synthesis of a compound biosynthetically related to polyketide antibiotics which is essential for spore color in Streptomyces coelicolor. This Streptomyces coelicolor (strain ATCC BAA-471 / A3(2) / M145) protein is Probable acyl carrier protein.